A 487-amino-acid polypeptide reads, in one-letter code: Protein nucleotidyltransferase YdiU (487 aa).

ATP-binding residues include G92, R95, K106, D118, G119, R169, and R176. D253 serves as the catalytic Proton acceptor. Mg(2+) is bound by residues N254 and D263. Residue D263 coordinates ATP.

Belongs to the SELO family. Mg(2+) serves as cofactor. Mn(2+) is required as a cofactor.

It carries out the reaction L-seryl-[protein] + ATP = 3-O-(5'-adenylyl)-L-seryl-[protein] + diphosphate. The catalysed reaction is L-threonyl-[protein] + ATP = 3-O-(5'-adenylyl)-L-threonyl-[protein] + diphosphate. It catalyses the reaction L-tyrosyl-[protein] + ATP = O-(5'-adenylyl)-L-tyrosyl-[protein] + diphosphate. The enzyme catalyses L-histidyl-[protein] + UTP = N(tele)-(5'-uridylyl)-L-histidyl-[protein] + diphosphate. It carries out the reaction L-seryl-[protein] + UTP = O-(5'-uridylyl)-L-seryl-[protein] + diphosphate. The catalysed reaction is L-tyrosyl-[protein] + UTP = O-(5'-uridylyl)-L-tyrosyl-[protein] + diphosphate. Functionally, nucleotidyltransferase involved in the post-translational modification of proteins. It can catalyze the addition of adenosine monophosphate (AMP) or uridine monophosphate (UMP) to a protein, resulting in modifications known as AMPylation and UMPylation. In Bordetella pertussis (strain Tohama I / ATCC BAA-589 / NCTC 13251), this protein is Protein nucleotidyltransferase YdiU.